The primary structure comprises 339 residues: UDP-N-acetylglucosamine--N-acetylmuramyl-(pentapeptide) pyrophosphoryl-undecaprenol N-acetylglucosamine transferase (339 aa).

UDP-N-acetyl-alpha-D-glucosamine is bound by residues 11 to 13, asparagine 127, arginine 170, serine 188, isoleucine 235, and glutamine 280; that span reads TGG.

Belongs to the glycosyltransferase 28 family. MurG subfamily.

The protein resides in the cell inner membrane. It carries out the reaction di-trans,octa-cis-undecaprenyl diphospho-N-acetyl-alpha-D-muramoyl-L-alanyl-D-glutamyl-meso-2,6-diaminopimeloyl-D-alanyl-D-alanine + UDP-N-acetyl-alpha-D-glucosamine = di-trans,octa-cis-undecaprenyl diphospho-[N-acetyl-alpha-D-glucosaminyl-(1-&gt;4)]-N-acetyl-alpha-D-muramoyl-L-alanyl-D-glutamyl-meso-2,6-diaminopimeloyl-D-alanyl-D-alanine + UDP + H(+). It functions in the pathway cell wall biogenesis; peptidoglycan biosynthesis. Functionally, cell wall formation. Catalyzes the transfer of a GlcNAc subunit on undecaprenyl-pyrophosphoryl-MurNAc-pentapeptide (lipid intermediate I) to form undecaprenyl-pyrophosphoryl-MurNAc-(pentapeptide)GlcNAc (lipid intermediate II). In Thermotoga petrophila (strain ATCC BAA-488 / DSM 13995 / JCM 10881 / RKU-1), this protein is UDP-N-acetylglucosamine--N-acetylmuramyl-(pentapeptide) pyrophosphoryl-undecaprenol N-acetylglucosamine transferase.